The sequence spans 176 residues: Probable fimbrial subunit LpfE (176 aa).

The N-terminal stretch at 1-23 (MKFKRLLHSGIASLSLVACGVNA) is a signal peptide.

It belongs to the fimbrial protein family.

Its subcellular location is the fimbrium. Its function is as follows. Part of the lpfABCC'DE fimbrial operon. LP fimbriae may participate in the interaction with eukaryotic cells by assisting in microcolony formation. The polypeptide is Probable fimbrial subunit LpfE (lpfE) (Escherichia coli O157:H7).